We begin with the raw amino-acid sequence, 229 residues long: 4-hydroxy-tetrahydrodipicolinate reductase (229 aa).

NAD(+) is bound by residues 10–15 (GSAGRM), 78–80 (GTT), and 102–105 (SSNM). The active-site Proton donor/acceptor is the His133. Residue His134 participates in (S)-2,3,4,5-tetrahydrodipicolinate binding. Catalysis depends on Lys137, which acts as the Proton donor. (S)-2,3,4,5-tetrahydrodipicolinate is bound at residue 143–144 (GT).

This sequence belongs to the DapB family.

The protein resides in the cytoplasm. The catalysed reaction is (S)-2,3,4,5-tetrahydrodipicolinate + NAD(+) + H2O = (2S,4S)-4-hydroxy-2,3,4,5-tetrahydrodipicolinate + NADH + H(+). It carries out the reaction (S)-2,3,4,5-tetrahydrodipicolinate + NADP(+) + H2O = (2S,4S)-4-hydroxy-2,3,4,5-tetrahydrodipicolinate + NADPH + H(+). The protein operates within amino-acid biosynthesis; L-lysine biosynthesis via DAP pathway; (S)-tetrahydrodipicolinate from L-aspartate: step 4/4. Its function is as follows. Catalyzes the conversion of 4-hydroxy-tetrahydrodipicolinate (HTPA) to tetrahydrodipicolinate. The polypeptide is 4-hydroxy-tetrahydrodipicolinate reductase (Bdellovibrio bacteriovorus (strain ATCC 15356 / DSM 50701 / NCIMB 9529 / HD100)).